The primary structure comprises 392 residues: Trans-2-enoyl-CoA reductase [NADH] (392 aa).

NAD(+) is bound by residues phenylalanine 74–glutamate 75, aspartate 111–alanine 112, and leucine 141–alanine 142. Tyrosine 227 is a binding site for substrate. The Proton donor role is filled by tyrosine 237. Residues lysine 246 and valine 276 to threonine 278 contribute to the NAD(+) site.

The protein belongs to the TER reductase family. Monomer.

It catalyses the reaction a 2,3-saturated acyl-CoA + NAD(+) = a (2E)-enoyl-CoA + NADH + H(+). The protein operates within lipid metabolism; fatty acid biosynthesis. Involved in the fatty acid synthesis (FAS II). Catalyzes the reduction of a carbon-carbon double bond in an enoyl moiety that is covalently linked to a coenzyme A (CoA). This chain is Trans-2-enoyl-CoA reductase [NADH], found in Brachyspira hyodysenteriae (strain ATCC 49526 / WA1).